The chain runs to 609 residues: Glutamine--fructose-6-phosphate aminotransferase [isomerizing] (609 aa).

C2 (nucleophile; for GATase activity) is an active-site residue. The Glutamine amidotransferase type-2 domain maps to 2–218 (CGIVGAIAQR…EGDIAEITRR (217 aa)). SIS domains follow at residues 286–426 (ADDL…LKGL) and 458–599 (LAED…VDQP). The active-site For Fru-6P isomerization activity is K604.

In terms of assembly, homodimer.

The protein resides in the cytoplasm. It catalyses the reaction D-fructose 6-phosphate + L-glutamine = D-glucosamine 6-phosphate + L-glutamate. Functionally, catalyzes the first step in hexosamine metabolism, converting fructose-6P into glucosamine-6P using glutamine as a nitrogen source. This Salmonella typhi protein is Glutamine--fructose-6-phosphate aminotransferase [isomerizing].